The primary structure comprises 490 residues: ATP synthase subunit alpha 1 (490 aa).

This sequence belongs to the ATPase alpha/beta chains family. In terms of assembly, F-type ATPases have 2 components, CF(1) - the catalytic core - and CF(0) - the membrane proton channel. CF(1) has five subunits: alpha(3), beta(3), gamma(1), delta(1), epsilon(1). CF(0) has three main subunits: a(1), b(2) and c(9-12). The alpha and beta chains form an alternating ring which encloses part of the gamma chain. CF(1) is attached to CF(0) by a central stalk formed by the gamma and epsilon chains, while a peripheral stalk is formed by the delta and b chains.

Its subcellular location is the cell inner membrane. The enzyme catalyses ATP + H2O + 4 H(+)(in) = ADP + phosphate + 5 H(+)(out). In terms of biological role, produces ATP from ADP in the presence of a proton gradient across the membrane. The alpha chain is a regulatory subunit. The polypeptide is ATP synthase subunit alpha 1 (Legionella pneumophila (strain Paris)).